The sequence spans 293 residues: Foldase protein PrsA 2 (293 aa).

A signal peptide spans 1–20; the sequence is MKKKLILGLVMMMALFSLAA. A lipid anchor (N-palmitoyl cysteine) is attached at C21. The S-diacylglycerol cysteine moiety is linked to residue C21. Residues 135-226 form the PpiC domain; that stretch reads QPDITVSHIL…YGYHIIQMDK (92 aa).

Belongs to the PrsA family.

The protein localises to the cell membrane. The catalysed reaction is [protein]-peptidylproline (omega=180) = [protein]-peptidylproline (omega=0). In terms of biological role, plays a major role in protein secretion by helping the post-translocational extracellular folding of several secreted proteins. This is Foldase protein PrsA 2 (prsA2) from Listeria monocytogenes serovar 1/2a (strain ATCC BAA-679 / EGD-e).